The chain runs to 325 residues: Beta-ketoacyl-[acyl-carrier-protein] synthase III (325 aa).

Residues Cys116 and His252 contribute to the active site. An ACP-binding region spans residues 253-257 (QANLR). Residue Asn282 is part of the active site.

This sequence belongs to the thiolase-like superfamily. FabH family. Homodimer.

It localises to the cytoplasm. It catalyses the reaction butanoyl-CoA + malonyl-[ACP] + H(+) = 3-oxohexanoyl-[ACP] + CO2 + CoA. It carries out the reaction hexanoyl-CoA + malonyl-[ACP] + H(+) = 3-oxooctanoyl-[ACP] + CO2 + CoA. The catalysed reaction is octanoyl-CoA + malonyl-[ACP] + H(+) = 3-oxodecanoyl-[ACP] + CO2 + CoA. The enzyme catalyses decanoyl-CoA + malonyl-[ACP] + H(+) = 3-oxododecanoyl-[ACP] + CO2 + CoA. It catalyses the reaction 2-methylpropanoyl-CoA + malonyl-[ACP] + H(+) = 4-methyl-3-oxopentanoyl-[ACP] + CO2 + CoA. It carries out the reaction 3-methylbutanoyl-CoA + malonyl-[ACP] + H(+) = 5-methyl-3-oxohexanoyl-[ACP] + CO2 + CoA. The catalysed reaction is malonyl-[ACP] + acetyl-CoA + H(+) = 3-oxobutanoyl-[ACP] + CO2 + CoA. Its pathway is lipid metabolism; fatty acid biosynthesis. Catalyzes the condensation reaction of fatty acid synthesis by the addition to an acyl acceptor of two carbons from malonyl-ACP. Catalyzes the first condensation reaction which initiates fatty acid synthesis and may therefore play a role in governing the total rate of fatty acid production. Possesses both acetoacetyl-ACP synthase and acetyl transacylase activities. Can use a wide range of acyl-CoAs as the primer substrate in vitro, with a slight preference for short, medium-straight chain acyl-CoAs. Can also use branched-chain acyl-CoAs and acetyl-CoA. In Xanthomonas campestris pv. campestris (strain 8004), this protein is Beta-ketoacyl-[acyl-carrier-protein] synthase III.